Reading from the N-terminus, the 235-residue chain is MVNQLEMLYEGKAKKIYATDKEDMVIVHYKDDATAFNGEKKAQIESKGVLNNEITSLIFEMLNKEGIKTHFVEKLNDRDQLCKKVEIVPLEVIVRNVAAGSMAKRLGLEEGYELKTTVFELSYKDDSLGDPLINDYHAVGIGATTFEELNKIYEITAKVNEILKEAFKKQNINLIDFKLEFGRYNGEILLADEISPDTCRFWDATTGEKMDKDRFRRDMGNVINGYREVLNRLRN.

This sequence belongs to the SAICAR synthetase family.

The enzyme catalyses 5-amino-1-(5-phospho-D-ribosyl)imidazole-4-carboxylate + L-aspartate + ATP = (2S)-2-[5-amino-1-(5-phospho-beta-D-ribosyl)imidazole-4-carboxamido]succinate + ADP + phosphate + 2 H(+). Its pathway is purine metabolism; IMP biosynthesis via de novo pathway; 5-amino-1-(5-phospho-D-ribosyl)imidazole-4-carboxamide from 5-amino-1-(5-phospho-D-ribosyl)imidazole-4-carboxylate: step 1/2. This Clostridium perfringens (strain 13 / Type A) protein is Phosphoribosylaminoimidazole-succinocarboxamide synthase.